A 325-amino-acid polypeptide reads, in one-letter code: Acetyl-coenzyme A carboxylase carboxyl transferase subunit alpha (325 aa).

Positions 43–297 (ELENNSTQLR…KTSLIAHLRQ (255 aa)) constitute a CoA carboxyltransferase C-terminal domain.

It belongs to the AccA family. In terms of assembly, acetyl-CoA carboxylase is a heterohexamer composed of biotin carboxyl carrier protein (AccB), biotin carboxylase (AccC) and two subunits each of ACCase subunit alpha (AccA) and ACCase subunit beta (AccD).

The protein localises to the cytoplasm. It catalyses the reaction N(6)-carboxybiotinyl-L-lysyl-[protein] + acetyl-CoA = N(6)-biotinyl-L-lysyl-[protein] + malonyl-CoA. It functions in the pathway lipid metabolism; malonyl-CoA biosynthesis; malonyl-CoA from acetyl-CoA: step 1/1. Its function is as follows. Component of the acetyl coenzyme A carboxylase (ACC) complex. First, biotin carboxylase catalyzes the carboxylation of biotin on its carrier protein (BCCP) and then the CO(2) group is transferred by the carboxyltransferase to acetyl-CoA to form malonyl-CoA. This chain is Acetyl-coenzyme A carboxylase carboxyl transferase subunit alpha, found in Cyanothece sp. (strain PCC 7425 / ATCC 29141).